The sequence spans 466 residues: MAAPRTSTRKFLGRLSLPERNFVAEALRTETVGGVLLLLAAITALIWANVPALHHSYESVSHFHFGPAPLGLDLSVQHWAADGLLAVFFFVAGIELKRELVAGDLKDPKAAALPVAAALCGMAVPALVYTLTNLTGGGSLRGWAVPTATDIAFALAVLAVIGTSLPSALRAFLLTLAVVDDLFAILIIAVFFTADLNFAALAGAVIGLAVFWLLLRKGVRGWYVYVPLALVIWGLMYNSGIHATIAGVAMGLMLRCHRHQGEEHAPGEHIEHLVRPLSAGLAVPLFALFSAGVVISGGALGDVFTRPETLGVVLGLVVGKAIGIFGGTWLTARFTRASLSDDLAWPDVFAVASLAGIGFTVSLLIGELAFDGDPVLTDEVKAAVLTGSLLAALIATTLLKLRNAKYRALCEDEERDEDSDGIPDIYEQDNPAYHLRMAEIYERKAAEHRRLAEVTGGAGAENDGPA.

11 helical membrane passes run 32-52, 74-94, 111-131, 142-162, 172-192, 195-215, 221-241, 280-300, 310-330, 348-368, and 379-399; these read VGGVLLLLAAITALIWANVPA, LSVQHWAADGLLAVFFFVAGI, AALPVAAALCGMAVPALVYTL, GWAVPTATDIAFALAVLAVIG, FLLTLAVVDDLFAILIIAVFF, DLNFAALAGAVIGLAVFWLLL, GWYVYVPLALVIWGLMYNSGI, GLAVPLFALFSAGVVISGGAL, LGVVLGLVVGKAIGIFGGTWL, VFAVASLAGIGFTVSLLIGEL, and EVKAAVLTGSLLAALIATTLL.

The protein belongs to the NhaA Na(+)/H(+) (TC 2.A.33) antiporter family.

The protein localises to the cell membrane. The enzyme catalyses Na(+)(in) + 2 H(+)(out) = Na(+)(out) + 2 H(+)(in). In terms of biological role, na(+)/H(+) antiporter that extrudes sodium in exchange for external protons. The chain is Na(+)/H(+) antiporter NhaA from Streptomyces avermitilis (strain ATCC 31267 / DSM 46492 / JCM 5070 / NBRC 14893 / NCIMB 12804 / NRRL 8165 / MA-4680).